The chain runs to 717 residues: Protein Teyrha-meyrha (717 aa).

Over residues 140–152 the composition is skewed to polar residues; the sequence is FRTDSASPTCTSH. 6 disordered regions span residues 140–214, 229–270, 440–498, 511–539, 563–594, and 624–717; these read FRTD…SNPA, HLAA…APPV, KIPP…QPGK, SQKD…GEAP, DSCG…MDTA, and QRRQ…DTKA. A compositionally biased stretch (low complexity) spans 195 to 214; that stretch reads ATSSSASSSSSSSCSTSNPA. Residues 235–263 show a composition bias toward basic residues; sequence PHHHPHTHAHSHPHPLAHPHAHSHHHVGH. Positions 442-451 are enriched in basic and acidic residues; that stretch reads PPEDDAKSQE. The span at 452 to 466 shows a compositional bias: acidic residues; sequence EIETVDVESCNDEVP. Polar residues predominate over residues 471–482; it reads ELATPSSGSSGT. Over residues 513 to 522 the composition is skewed to basic and acidic residues; sequence KDPHPDEHDV. Composition is skewed to low complexity over residues 523-533 and 570-580; these read STNVTTASSSS and NDTNSSSSTHN. Positions 630–640 are enriched in polar residues; the sequence is QNVGSSRSLEN. Low complexity predominate over residues 667–686; that stretch reads NNNNNNNNNNNNSNSNNNNN. Residues 687–704 show a composition bias toward polar residues; the sequence is PSTKYAESMENSLSQLSS.

In terms of tissue distribution, in embryos, expressed specifically in M12 (at protein level).

Its subcellular location is the nucleus. Its function is as follows. Required for the correct synaptic targeting of motoneurons RP5 and V to muscle 12 (M12). May be involved in the negative regulation of Tl in M12. Involved in the correct patterning of veins in the proximal (costal) region of the wing blade. The sequence is that of Protein Teyrha-meyrha from Drosophila melanogaster (Fruit fly).